A 332-amino-acid polypeptide reads, in one-letter code: Glycerol-3-phosphate dehydrogenase [NAD(P)+] (332 aa).

The NADPH site is built by S14, W15, R35, and K107. The sn-glycerol 3-phosphate site is built by K107, G137, and S139. Position 141 (A141) interacts with NADPH. Positions 192, 245, 255, 256, and 257 each coordinate sn-glycerol 3-phosphate. The active-site Proton acceptor is the K192. R256 serves as a coordination point for NADPH. Positions 280 and 282 each coordinate NADPH.

The protein belongs to the NAD-dependent glycerol-3-phosphate dehydrogenase family.

The protein localises to the cytoplasm. It carries out the reaction sn-glycerol 3-phosphate + NAD(+) = dihydroxyacetone phosphate + NADH + H(+). It catalyses the reaction sn-glycerol 3-phosphate + NADP(+) = dihydroxyacetone phosphate + NADPH + H(+). The protein operates within membrane lipid metabolism; glycerophospholipid metabolism. Functionally, catalyzes the reduction of the glycolytic intermediate dihydroxyacetone phosphate (DHAP) to sn-glycerol 3-phosphate (G3P), the key precursor for phospholipid synthesis. The polypeptide is Glycerol-3-phosphate dehydrogenase [NAD(P)+] (Desulfovibrio desulfuricans (strain ATCC 27774 / DSM 6949 / MB)).